A 264-amino-acid polypeptide reads, in one-letter code: Outer kinetochore KNL1 complex subunit sos7 (264 aa).

Residues Glu-90–Thr-236 adopt a coiled-coil conformation.

It belongs to the KRE28 family. As to quaternary structure, component of the KNL1/SPC105 complex composed of at least spc7 and sos7. Part of the outer kinetochore KMN network that includes the KNL1, MIS12 and NDC80 complexes. Interacts (via C-terminus) with spc7 (via C-terminus); the interaction is direct.

The protein resides in the nucleus. Its subcellular location is the chromosome. It localises to the centromere. The protein localises to the kinetochore. In terms of biological role, acts as a component of the outer kinetochore KNL1 complex that facilitates microtubule-kinetochore interactions and the spindle assembly checkpoint. Kinetochores, consisting of a centromere-associated inner segment and a microtubule-contacting outer segment, play a crucial role in chromosome segregation by mediating the physical connection between centromeric DNA and spindle microtubules. The outer kinetochore is made up of the ten-subunit KMN network, comprising the MIS12, NDC80 and KNL1 complexes, and auxiliary microtubule-associated components; together they connect the outer kinetochore with the inner kinetochore, bind microtubules, and mediate interactions with mitotic checkpoint proteins that delay anaphase until chromosomes are bioriented on the spindle. This Schizosaccharomyces pombe (strain 972 / ATCC 24843) (Fission yeast) protein is Outer kinetochore KNL1 complex subunit sos7 (sos7).